The following is an 87-amino-acid chain: uncharacterized protein (87 aa).

The signal sequence occupies residues 1-26 (MMSTQHFILSLTILIIISNLHDEVNA). Disulfide bonds link C61/C75, C68/C79, and C74/C84.

The protein localises to the secreted. This is an uncharacterized protein from Schistosoma japonicum (Blood fluke).